Consider the following 382-residue polypeptide: PqqA peptide cyclase (382 aa).

A Radical SAM core domain is found at 8 to 223 (VKPPLWLLAE…VHRYREKMAA (216 aa)). [4Fe-4S] cluster is bound by residues cysteine 22, cysteine 26, and cysteine 29.

Belongs to the radical SAM superfamily. PqqE family. As to quaternary structure, interacts with PqqD. The interaction is necessary for activity of PqqE. It depends on [4Fe-4S] cluster as a cofactor.

It catalyses the reaction [PQQ precursor protein] + S-adenosyl-L-methionine = E-Y cross-linked-[PQQ precursor protein] + 5'-deoxyadenosine + L-methionine + H(+). Its pathway is cofactor biosynthesis; pyrroloquinoline quinone biosynthesis. In terms of biological role, catalyzes the cross-linking of a glutamate residue and a tyrosine residue in the PqqA protein as part of the biosynthesis of pyrroloquinoline quinone (PQQ). The sequence is that of PqqA peptide cyclase from Erwinia tasmaniensis (strain DSM 17950 / CFBP 7177 / CIP 109463 / NCPPB 4357 / Et1/99).